The primary structure comprises 292 residues: Calcium-binding protein CBP (292 aa).

The tract at residues 1-80 is disordered; sequence MAGYPPNPGS…YGSGGGYGAP (80 aa). Residues 12 to 21 are compositionally biased toward gly residues; that stretch reads YPYGGAGGYG. A compositionally biased stretch (pro residues) spans 22–40; it reads APPPPYGSSPAPSAPPYGA. EF-hand domains are found at residues 121–156 and 187–222; these read GTDPNVVACFQAADRDGSGMIDDKELQSALSGYSQS and YSLQNWRSIFERFDRDRSGKIDATELRDALLSLGYS. 10 residues coordinate Ca(2+): Asp134, Asp136, Ser138, Met140, Glu145, Asp200, Asp202, Ser204, Lys206, and Glu211.

Its function is as follows. Potential calcium sensor. The sequence is that of Calcium-binding protein CBP from Oryza sativa subsp. japonica (Rice).